A 682-amino-acid chain; its full sequence is Activating transcription factor 7-interacting protein 2 (682 aa).

The disordered stretch occupies residues 120–148; the sequence is SRTTESPSRVFTEEAKDSLNTSENDSEHQ. Over residues 137 to 148 the composition is skewed to polar residues; it reads SLNTSENDSEHQ. Residues 328–378 are a coiled coil; that stretch reads EIYSINYELFDKKLKELNQRIGKTECRNKHEGIADKLLAKIAKLQRRIKTV. Ser416 carries the phosphoserine modification. Composition is skewed to polar residues over residues 418–451 and 462–490; these read IEKSSVNYEPSNPSEKGSKKINLSSDQNKSVSES and ESPNLTTPITSNPTDTRKITSGNSSNSPN. Disordered regions lie at residues 418–491 and 513–538; these read IEKS…SPNA and NCNTESPVSPLESHSKAASNSKETTP. Phosphoserine occurs at positions 488 and 521. The segment covering 528-538 has biased composition (polar residues); sequence KAASNSKETTP. A Fibronectin type-III domain is found at 575–680; sequence PPQKPELKVK…IKSIPGFSEN (106 aa).

The protein belongs to the MCAF family. Interacts with MBD1, SETDB1 and SP1. Probably forms a complex with SETDB1 and MBD1.

The protein resides in the nucleus. In terms of biological role, recruiter that couples transcriptional factors to general transcription apparatus and thereby modulates transcription regulation and chromatin formation. Can both act as an activator or a repressor depending on the context. Mediates MBD1-dependent transcriptional repression, probably by recruiting complexes containing SETDB1. The complex formed with MBD1 and SETDB1 represses transcription and probably couples DNA methylation and histone H3 'Lys-9' trimethylation (H3K9me3) activity. The polypeptide is Activating transcription factor 7-interacting protein 2 (ATF7IP2) (Homo sapiens (Human)).